The sequence spans 229 residues: Leucyl/phenylalanyl-tRNA--protein transferase (229 aa).

Belongs to the L/F-transferase family.

Its subcellular location is the cytoplasm. The catalysed reaction is N-terminal L-lysyl-[protein] + L-leucyl-tRNA(Leu) = N-terminal L-leucyl-L-lysyl-[protein] + tRNA(Leu) + H(+). It catalyses the reaction N-terminal L-arginyl-[protein] + L-leucyl-tRNA(Leu) = N-terminal L-leucyl-L-arginyl-[protein] + tRNA(Leu) + H(+). The enzyme catalyses L-phenylalanyl-tRNA(Phe) + an N-terminal L-alpha-aminoacyl-[protein] = an N-terminal L-phenylalanyl-L-alpha-aminoacyl-[protein] + tRNA(Phe). Its function is as follows. Functions in the N-end rule pathway of protein degradation where it conjugates Leu, Phe and, less efficiently, Met from aminoacyl-tRNAs to the N-termini of proteins containing an N-terminal arginine or lysine. The polypeptide is Leucyl/phenylalanyl-tRNA--protein transferase (Pseudomonas syringae pv. syringae (strain B728a)).